The sequence spans 630 residues: Phosphatidylinositol 4-kinase gamma 5 (630 aa).

The Ubiquitin-like; degenerate domain occupies 41-98; sequence RRVFVQTETGCVLGLELDRSDNAHTVKRKLQVALNFPIEESSLTFGDLVLKNDLTAVR. Residues 162-459 enclose the PI3K/PI4K catalytic domain; the sequence is GIDPVAVNSG…LIGEKDAESP (298 aa). The tract at residues 168–174 is G-loop; that stretch reads VNSGLGG. Residues 169–175, K190, and 279–282 contribute to the ATP site; these read NSGLGGA and QQFI. The catalytic loop stretch occupies residues 312–320; it reads LNTDRHSGN. Residues 339-365 are activation loop; it reads PIDHGLCLPETLEDPYFEWIHWPQASI. Residue D341 participates in ATP binding. Residues 500–527 are disordered; that stretch reads LSKVEETTEDGEEEEEEDREEEENDRAD. Residues 506-524 are compositionally biased toward acidic residues; that stretch reads TTEDGEEEEEEDREEEEND. At S571 the chain carries Phosphoserine.

This sequence belongs to the PI3/PI4-kinase family. Type II PI4K subfamily. As to quaternary structure, interacts with AHK2.

It carries out the reaction a 1,2-diacyl-sn-glycero-3-phospho-(1D-myo-inositol) + ATP = a 1,2-diacyl-sn-glycero-3-phospho-(1D-myo-inositol 4-phosphate) + ADP + H(+). Its function is as follows. The phosphorylation of phosphatidylinositol (PI) to PI4P is the first committed step in the generation of phosphatidylinositol 4,5-bisphosphate (PIP2), a precursor of the second messenger inositol 1,4,5-trisphosphate (InsP3). The chain is Phosphatidylinositol 4-kinase gamma 5 (PI4KG5) from Arabidopsis thaliana (Mouse-ear cress).